The sequence spans 247 residues: GTP cyclohydrolase 1 type 2 homolog (247 aa).

The a divalent metal cation site is built by histidine 63, histidine 64, aspartate 101, histidine 215, and glutamate 219.

It belongs to the GTP cyclohydrolase I type 2/NIF3 family. As to quaternary structure, homohexamer.

The protein is GTP cyclohydrolase 1 type 2 homolog of Buchnera aphidicola subsp. Acyrthosiphon pisum (strain APS) (Acyrthosiphon pisum symbiotic bacterium).